A 361-amino-acid polypeptide reads, in one-letter code: Phosphoserine aminotransferase (361 aa).

Residue arginine 43 participates in L-glutamate binding. Pyridoxal 5'-phosphate is bound by residues 77–78 (AS), tryptophan 103, threonine 153, aspartate 172, and glutamine 195. Residue lysine 196 is modified to N6-(pyridoxal phosphate)lysine. 237 to 238 (NT) serves as a coordination point for pyridoxal 5'-phosphate.

Belongs to the class-V pyridoxal-phosphate-dependent aminotransferase family. SerC subfamily. Homodimer. The cofactor is pyridoxal 5'-phosphate.

The protein localises to the cytoplasm. The enzyme catalyses O-phospho-L-serine + 2-oxoglutarate = 3-phosphooxypyruvate + L-glutamate. It carries out the reaction 4-(phosphooxy)-L-threonine + 2-oxoglutarate = (R)-3-hydroxy-2-oxo-4-phosphooxybutanoate + L-glutamate. It functions in the pathway amino-acid biosynthesis; L-serine biosynthesis; L-serine from 3-phospho-D-glycerate: step 2/3. The protein operates within cofactor biosynthesis; pyridoxine 5'-phosphate biosynthesis; pyridoxine 5'-phosphate from D-erythrose 4-phosphate: step 3/5. In terms of biological role, catalyzes the reversible conversion of 3-phosphohydroxypyruvate to phosphoserine and of 3-hydroxy-2-oxo-4-phosphonooxybutanoate to phosphohydroxythreonine. This chain is Phosphoserine aminotransferase, found in Desulfotalea psychrophila (strain LSv54 / DSM 12343).